Here is a 509-residue protein sequence, read N- to C-terminus: Proline-rich receptor-like protein kinase PERK15 (509 aa).

The tract at residues 1 to 44 (MSTDTIPSLSSPPAPEFPSTTPDTATSPAPSQPSIIGPSSLAPF) is disordered. Residues 1 to 61 (MSTDTIPSLS…DGGSRNVALT (61 aa)) lie on the Extracellular side of the membrane. The span at 18–34 (PSTTPDTATSPAPSQPS) shows a compositional bias: low complexity. Residues 62-82 (GLITGVVLGATFVLLGVCIFV) form a helical membrane-spanning segment. Residues 83–509 (CFYKRKKRKL…IEPEKNTKDT (427 aa)) lie on the Cytoplasmic side of the membrane. T132 carries the post-translational modification Phosphothreonine. In terms of domain architecture, Protein kinase spans 143-423 (FSNTNLLGQG…VRAFEGNISI (281 aa)). ATP is bound by residues 149–157 (LGQGGFGYV) and K171. Y216 bears the Phosphotyrosine mark. Residue D267 is the Proton acceptor of the active site. Phosphoserine is present on S300. Residues T301 and T306 each carry the phosphothreonine modification. At Y314 the chain carries Phosphotyrosine. Residues 468–499 (FGSSECSGLTSDNGQNPSGSSSITEGQRTTQE) show a composition bias toward polar residues. The segment at 468–509 (FGSSECSGLTSDNGQNPSGSSSITEGQRTTQEIEPEKNTKDT) is disordered.

The protein belongs to the protein kinase superfamily. Ser/Thr protein kinase family. Mostly expressed in inflorescence bolts, and, to a lower extent, in flower buds and siliques.

The protein resides in the cell membrane. The enzyme catalyses L-seryl-[protein] + ATP = O-phospho-L-seryl-[protein] + ADP + H(+). The catalysed reaction is L-threonyl-[protein] + ATP = O-phospho-L-threonyl-[protein] + ADP + H(+). This is Proline-rich receptor-like protein kinase PERK15 (PERK15) from Arabidopsis thaliana (Mouse-ear cress).